Here is a 1199-residue protein sequence, read N- to C-terminus: DNA-directed RNA polymerase subunit beta (1199 aa).

Positions 1175-1199 are disordered; sequence EEKKAHEAAAQATDGKSANSTDDKK. The span at 1188–1199 shows a compositional bias: polar residues; sequence DGKSANSTDDKK.

This sequence belongs to the RNA polymerase beta chain family. In terms of assembly, the RNAP catalytic core consists of 2 alpha, 1 beta, 1 beta' and 1 omega subunit. When a sigma factor is associated with the core the holoenzyme is formed, which can initiate transcription.

It catalyses the reaction RNA(n) + a ribonucleoside 5'-triphosphate = RNA(n+1) + diphosphate. Its function is as follows. DNA-dependent RNA polymerase catalyzes the transcription of DNA into RNA using the four ribonucleoside triphosphates as substrates. The protein is DNA-directed RNA polymerase subunit beta of Lacticaseibacillus paracasei (strain ATCC 334 / BCRC 17002 / CCUG 31169 / CIP 107868 / KCTC 3260 / NRRL B-441) (Lactobacillus paracasei).